The sequence spans 161 residues: UPF0763 protein Cla_1130 (161 aa).

The protein belongs to the UPF0763 family.

This is UPF0763 protein Cla_1130 from Campylobacter lari (strain RM2100 / D67 / ATCC BAA-1060).